A 248-amino-acid polypeptide reads, in one-letter code: Small ribosomal subunit protein uS3 (248 aa).

The region spanning 39–113 is the KH type-2 domain; sequence IRAYLTKQLS…TIRINVVEVT (75 aa). The tract at residues 218 to 248 is disordered; sequence ERPEQKVPLQQPKRRQQRRRPTFEDRSAVEA. Positions 238-248 are enriched in basic and acidic residues; it reads PTFEDRSAVEA.

Belongs to the universal ribosomal protein uS3 family. Part of the 30S ribosomal subunit. Forms a tight complex with proteins S10 and S14.

Functionally, binds the lower part of the 30S subunit head. Binds mRNA in the 70S ribosome, positioning it for translation. The polypeptide is Small ribosomal subunit protein uS3 (Synechococcus sp. (strain JA-3-3Ab) (Cyanobacteria bacterium Yellowstone A-Prime)).